A 299-amino-acid polypeptide reads, in one-letter code: Nucleotide-binding protein DIP1313 (299 aa).

Position 22-29 (22-29 (GLSGAGLS)) interacts with ATP. Residue 73–76 (DVRS) participates in GTP binding.

This sequence belongs to the RapZ-like family.

In terms of biological role, displays ATPase and GTPase activities. The polypeptide is Nucleotide-binding protein DIP1313 (Corynebacterium diphtheriae (strain ATCC 700971 / NCTC 13129 / Biotype gravis)).